The primary structure comprises 378 residues: MNPRLRHWREAASVLLAAGAPGRRSPSPLGPCDYELLFLQRSSRSGFMPSAHVFPGGLVEAADFSAEWLRLLPAAPRCGLGAVRPPPPGGSRAPLFATDRQPLGSPLPGEVAFRICAIRETFEEAGILLLAPGGRPREGSGPAPSLPAEQLLPAAELGEWRRRVQEDPACFLQLCQRLGRVPDIWALQEWSNWLTPVGRAGRGGRRYDTAFYLCCLETRPPHTSQDNQEIAAFLWSSPPEAIERFKSQEIWLAPPQFYELCRLCNFSSLNDLHKFSSDRALEGCERWLPVTLTAADGFIQLLPGDELYPEDPDYTGEKKITMSTDKMVEDLMKEGSVFHRIVIKNTHSLAVYVNIQAKYKHMNPLMINTDSSNYNSRL.

The Nudix hydrolase domain occupies 7-258 (HWREAASVLL…EIWLAPPQFY (252 aa)). Positions 105–126 (SPLPGEVAFRICAIRETFEEAG) match the Nudix box motif. Residues E120 and E124 each coordinate Mg(2+). The short motif at 376 to 378 (SRL) is the Microbody targeting signal element.

Belongs to the Nudix hydrolase family. Monomer. Mg(2+) is required as a cofactor. It depends on Mn(2+) as a cofactor.

Its subcellular location is the peroxisome. It catalyses the reaction an acyl-CoA + H2O = an acyl-4'-phosphopantetheine + adenosine 3',5'-bisphosphate + 2 H(+). The enzyme catalyses CoA + H2O = (R)-4'-phosphopantetheine + adenosine 3',5'-bisphosphate + 2 H(+). The catalysed reaction is hexanoyl-CoA + H2O = hexanoyl-4'-phosphopantetheine + adenosine 3',5'-bisphosphate + 2 H(+). It carries out the reaction octanoyl-CoA + H2O = S-octanoyl-4'-phosphopantetheine + adenosine 3',5'-bisphosphate + 2 H(+). It catalyses the reaction butanoyl-CoA + H2O = S-butanoyl-4'-phosphopantetheine + adenosine 3',5'-bisphosphate + 2 H(+). The enzyme catalyses propanoyl-CoA + H2O = propanoyl-4'-phosphopantetheine + adenosine 3',5'-bisphosphate + 2 H(+). The catalysed reaction is malonyl-CoA + H2O = malonyl-4'-phosphopantetheine + adenosine 3',5'-bisphosphate + 2 H(+). It carries out the reaction succinyl-CoA + H2O = succinyl-4'-phosphopantetheine + adenosine 3',5'-bisphosphate + 2 H(+). It catalyses the reaction choloyl-CoA + H2O = S-choloyl-4'-phosphopantetheine + adenosine 3',5'-bisphosphate + 2 H(+). The enzyme catalyses 4,8-dimethylnonanoyl-CoA + H2O = S-(4,8-dimethylnonanoyl)-4'-phosphopantetheine + adenosine 3',5'-bisphosphate + 2 H(+). The catalysed reaction is (9Z,12Z,15Z)-octadecatrienoyl-CoA + H2O = S-(9Z,12Z,15Z-octadecatrienoyl)-4'-phosphopantetheine + adenosine 3',5'-bisphosphate + 2 H(+). It carries out the reaction (9Z,12Z)-octadecadienoyl-CoA + H2O = S-(9Z,12Z-octadecadienoyl)-4'-phosphopantetheine + adenosine 3',5'-bisphosphate + 2 H(+). It catalyses the reaction (9Z)-hexadecenoyl-CoA + H2O = S-(9Z-hexadecenoyl)-4'-phosphopantetheine + adenosine 3',5'-bisphosphate + 2 H(+). The enzyme catalyses (9Z)-tetradecenoyl-CoA + H2O = S-(9Z-tetradecenoyl)-4'-phosphopantetheine + adenosine 3',5'-bisphosphate + 2 H(+). The catalysed reaction is (6Z)-octenoyl-CoA + H2O = S-(6Z-octenoyl)-4'-phosphopantetheine + adenosine 3',5'-bisphosphate + 2 H(+). It carries out the reaction hexadecanoyl-CoA + H2O = S-hexadecanoyl-4'-phosphopantetheine + adenosine 3',5'-bisphosphate + 2 H(+). It catalyses the reaction tetradecanoyl-CoA + H2O = tetradecanoyl-4'-phosphopantetheine + adenosine 3',5'-bisphosphate + 2 H(+). The enzyme catalyses dodecanoyl-CoA + H2O = S-dodecanoyl-4'-phosphopantetheine + adenosine 3',5'-bisphosphate + 2 H(+). The catalysed reaction is a 5'-end CoA-ribonucleoside in mRNA + H2O = a 5'-end phospho-adenosine-phospho-ribonucleoside in mRNA + (R)-4'-phosphopantetheine + 2 H(+). Functionally, fatty acyl-coenzyme A (CoA) diphosphatase that hydrolyzes fatty acyl-CoA to yield acyl-4'-phosphopantetheine and adenosine 3',5'-bisphosphate. Mediates the hydrolysis of a wide range of CoA esters, including choloyl-CoA and branched-chain fatty-acyl-CoA esters and at low substrate concentrations medium and long-chain fatty-acyl-CoA esters are the primary substrates. Highest activity seen with medium-chain acyl-CoA esters and higher rates of activity seen with the unsaturated acyl-CoA esters compared with the saturated esters. Exhibits decapping activity towards dpCoA-capped RNAs in vitro. In Gallus gallus (Chicken), this protein is Acyl-coenzyme A diphosphatase NUDT19 (NUDT19).